Consider the following 157-residue polypeptide: uncharacterized protein (157 aa).

K115 participates in a covalent cross-link: Isoglutamyl lysine isopeptide (Lys-Gln) (interchain with Q-Cter in protein Pup).

This is an uncharacterized protein from Mycolicibacterium smegmatis (strain ATCC 700084 / mc(2)155) (Mycobacterium smegmatis).